The primary structure comprises 322 residues: Putative T-box protein 11 (322 aa).

The segment at residues 16-185 (LWRSCHEYDN…NNPYSTGSRK (170 aa)) is a DNA-binding region (T-box). Residues 171 to 182 (TLKTNNNPYSTG) show a composition bias toward polar residues. The interval 171–214 (TLKTNNNPYSTGSRKDRRRERQSPVYSEGTSSEKSISPPPAKKI) is disordered.

Its subcellular location is the nucleus. The chain is Putative T-box protein 11 (tbx-11) from Caenorhabditis elegans.